Here is a 136-residue protein sequence, read N- to C-terminus: Large ribosomal subunit protein uL22 (136 aa).

It belongs to the universal ribosomal protein uL22 family. In terms of assembly, part of the 50S ribosomal subunit.

Functionally, this protein binds specifically to 23S rRNA; its binding is stimulated by other ribosomal proteins, e.g. L4, L17, and L20. It is important during the early stages of 50S assembly. It makes multiple contacts with different domains of the 23S rRNA in the assembled 50S subunit and ribosome. Its function is as follows. The globular domain of the protein is located near the polypeptide exit tunnel on the outside of the subunit, while an extended beta-hairpin is found that lines the wall of the exit tunnel in the center of the 70S ribosome. The polypeptide is Large ribosomal subunit protein uL22 (Bacteroides fragilis (strain ATCC 25285 / DSM 2151 / CCUG 4856 / JCM 11019 / LMG 10263 / NCTC 9343 / Onslow / VPI 2553 / EN-2)).